A 281-amino-acid chain; its full sequence is CMT1A duplicated region transcript 15 protein-like protein (281 aa).

Disordered regions lie at residues 107–131 (KPAW…DQPS) and 150–187 (AENV…HGGG). The segment covering 108-120 (PAWEEPPPERALE) has biased composition (basic and acidic residues). A compositionally biased stretch (low complexity) spans 165-178 (STAPASRSHAAPSP). A helical membrane pass occupies residues 207-227 (AGTTALLLQGLFIVLILVGYI).

Its subcellular location is the membrane. The sequence is that of CMT1A duplicated region transcript 15 protein-like protein (CDRT15L2) from Homo sapiens (Human).